Consider the following 683-residue polypeptide: U4/U6 small nuclear ribonucleoprotein Prp3 (683 aa).

The PWI domain occupies 1–87 (MALSKRELDE…HSKSSSDRSR (87 aa)). A compositionally biased stretch (basic and acidic residues) spans 73–107 (GRSSRHSKSSSDRSRKRDLKEVFGDDSEISKESSG). The segment at 73–135 (GRSSRHSKSS…IPGPPSESPG (63 aa)) is disordered. A Glycyl lysine isopeptide (Lys-Gly) (interchain with G-Cter in SUMO2) cross-link involves residue Lys139. Residues 153-183 (IEERKKQLSFISPPTPQPKTPSSSQPERLPI) form a disordered region. Ser164 is subject to Phosphoserine. Thr167 is subject to Phosphothreonine. Residues Lys244 and Lys252 each participate in a glycyl lysine isopeptide (Lys-Gly) (interchain with G-Cter in SUMO2) cross-link. The mediates interaction with SART3 stretch occupies residues 416 to 550 (NLVEHPAQLN…VHISVYRVRN (135 aa)). Ser619 bears the Phosphoserine mark.

Component of the precatalytic spliceosome (spliceosome B complex). Component of the U4/U6-U5 tri-snRNP complex, a building block of the precatalytic spliceosome (spliceosome B complex). The U4/U6-U5 tri-snRNP complex is composed of the U4, U6 and U5 snRNAs and at least PRPF3, PRPF4, PRPF6, PRPF8, PRPF31, SNRNP200, TXNL4A, SNRNP40, SNRPB, SNRPD1, SNRPD2, SNRPD3, SNRPE, SNRPF, SNRPG, DDX23, CD2BP2, PPIH, SNU13, EFTUD2, SART1 and USP39, plus LSM2, LSM3, LSM4, LSM5, LSM6, LSM7 and LSM8. Interacts directly with PRPF4. Part of a heteromeric complex containing PPIH, PRPF3 and PRPF4 that is stable in the absence of RNA. Interacts with SART3; the interaction is direct and recruits the deubiquitinase USP4 to PRPF3. Interacts with PRPF19. Interacts ('Lys-63'-linked polyubiquitinated) with PRPF8 (via the MPN (JAB/Mov34) domain); may stabilize the U4/U6-U5 tri-snRNP complex. Interacts with ERCC6. In terms of processing, ubiquitinated. Undergoes 'Lys-63'-linked polyubiquitination by PRPF19 and deubiquitination by USP4. 'Lys-63'-linked ubiquitination increases the affinity for PRPF8 and may regulate the assembly of the U4/U6-U5 tri-snRNP complex.

The protein resides in the nucleus. Its subcellular location is the nucleus speckle. Functionally, plays a role in pre-mRNA splicing as component of the U4/U6-U5 tri-snRNP complex that is involved in spliceosome assembly, and as component of the precatalytic spliceosome (spliceosome B complex). This Bos taurus (Bovine) protein is U4/U6 small nuclear ribonucleoprotein Prp3 (PRPF3).